Reading from the N-terminus, the 442-residue chain is F-box/kelch-repeat protein OR23 (442 aa).

An F-box domain is found at 37-84 (TLIPGLSNDVGRLILSFVPYPHISRIKSTCKSWYAFLSSKTLISLRHS). Kelch repeat units lie at residues 93 to 139 (LSHL…NFVA), 145 to 200 (YVYV…AMPG), 204 to 257 (RIIV…LVEN), 269 to 328 (EFWV…KIVA), 330 to 377 (DCGK…ALNG), and 390 to 437 (LMDT…TTVM).

The protein is F-box/kelch-repeat protein OR23 (OR23) of Arabidopsis thaliana (Mouse-ear cress).